The following is a 146-amino-acid chain: MKLHELKPSEGSRKERNRVGRGTGSGNGKTSGRGHKGQKARSGGGVRLGFEGGQLPLFRRIPKRGFTNINRKEFAIVNLDVLNRFEDGTEVTPELLIETGIIRNEKSGIKILSDGNIEKKLTVKANKFSAAAKEAIEAAGGKTEVI.

Residues 1-18 are compositionally biased toward basic and acidic residues; the sequence is MKLHELKPSEGSRKERNR. The tract at residues 1–50 is disordered; the sequence is MKLHELKPSEGSRKERNRVGRGTGSGNGKTSGRGHKGQKARSGGGVRLGF. A compositionally biased stretch (gly residues) spans 21 to 31; sequence RGTGSGNGKTS.

The protein belongs to the universal ribosomal protein uL15 family. In terms of assembly, part of the 50S ribosomal subunit.

Functionally, binds to the 23S rRNA. In Listeria innocua serovar 6a (strain ATCC BAA-680 / CLIP 11262), this protein is Large ribosomal subunit protein uL15.